Consider the following 157-residue polypeptide: Glycine-rich RNA-binding protein (157 aa).

The region spanning 6–84 (YRCFVGGLAW…RNITVNEAQS (79 aa)) is the RRM domain. The segment at 70-157 (QELDGRNITV…YGGGGGGSRW (88 aa)) is disordered. Composition is skewed to gly residues over residues 86 to 138 (GSGG…GGYG) and 145 to 157 (DGGYGGGGGGSRW).

In terms of biological role, may play a role in the biosynthesis and processing of heterogeneous nuclear RNA and in the maturation of specific mRNAs in response to wounding. The protein is Glycine-rich RNA-binding protein of Daucus carota (Wild carrot).